We begin with the raw amino-acid sequence, 206 residues long: Dihydrofolate reductase (206 aa).

Residues 6-204 (SLTLIVALTT…FDYEFEMWTR (199 aa)) form the DHFR domain. NADP(+) contacts are provided by residues Ala-12 and 18 to 24 (GIGRSNS). 32–37 (EISYFK) lines the substrate pocket. 59 to 61 (RKT) contributes to the NADP(+) binding site. Residue Arg-75 participates in substrate binding. Residues 81-83 (TRN) and 124-131 (GGAQLYKA) contribute to the NADP(+) site.

It belongs to the dihydrofolate reductase family.

The enzyme catalyses (6S)-5,6,7,8-tetrahydrofolate + NADP(+) = 7,8-dihydrofolate + NADPH + H(+). Its pathway is cofactor biosynthesis; tetrahydrofolate biosynthesis; 5,6,7,8-tetrahydrofolate from 7,8-dihydrofolate: step 1/1. In terms of biological role, key enzyme in folate metabolism. Catalyzes an essential reaction for de novo glycine and purine synthesis, and for DNA precursor synthesis. The polypeptide is Dihydrofolate reductase (Pneumocystis carinii).